The sequence spans 171 residues: 3-hydroxydecanoyl-[acyl-carrier-protein] dehydratase (171 aa).

The active site involves His70.

This sequence belongs to the thioester dehydratase family. FabA subfamily. In terms of assembly, homodimer.

Its subcellular location is the cytoplasm. The enzyme catalyses a (3R)-hydroxyacyl-[ACP] = a (2E)-enoyl-[ACP] + H2O. It catalyses the reaction (3R)-hydroxydecanoyl-[ACP] = (2E)-decenoyl-[ACP] + H2O. It carries out the reaction (2E)-decenoyl-[ACP] = (3Z)-decenoyl-[ACP]. It participates in lipid metabolism; fatty acid biosynthesis. Functionally, necessary for the introduction of cis unsaturation into fatty acids. Catalyzes the dehydration of (3R)-3-hydroxydecanoyl-ACP to E-(2)-decenoyl-ACP and then its isomerization to Z-(3)-decenoyl-ACP. Can catalyze the dehydratase reaction for beta-hydroxyacyl-ACPs with saturated chain lengths up to 16:0, being most active on intermediate chain length. In Shewanella halifaxensis (strain HAW-EB4), this protein is 3-hydroxydecanoyl-[acyl-carrier-protein] dehydratase.